Here is a 430-residue protein sequence, read N- to C-terminus: Adenylosuccinate synthetase (430 aa).

GTP contacts are provided by residues 12 to 18 and 40 to 42; these read GDEGKGK and GHT. Asp-13 serves as the catalytic Proton acceptor. Residues Asp-13 and Gly-40 each contribute to the Mg(2+) site. Residues 13 to 16, 38 to 41, Thr-130, Arg-144, Gln-224, Thr-239, and Arg-303 contribute to the IMP site; these read DEGK and NAGH. Residue His-41 is the Proton donor of the active site. 299–305 is a binding site for substrate; that stretch reads TNTGRPR. GTP-binding positions include Arg-305, 331 to 333, and 413 to 415; these read KLD and STS.

The protein belongs to the adenylosuccinate synthetase family. Homodimer. Mg(2+) is required as a cofactor.

Its subcellular location is the cytoplasm. The catalysed reaction is IMP + L-aspartate + GTP = N(6)-(1,2-dicarboxyethyl)-AMP + GDP + phosphate + 2 H(+). It functions in the pathway purine metabolism; AMP biosynthesis via de novo pathway; AMP from IMP: step 1/2. In terms of biological role, plays an important role in the de novo pathway of purine nucleotide biosynthesis. Catalyzes the first committed step in the biosynthesis of AMP from IMP. This chain is Adenylosuccinate synthetase, found in Rhodopseudomonas palustris (strain HaA2).